A 255-amino-acid polypeptide reads, in one-letter code: 5'-nucleotidase SurE (255 aa).

Residues Asp8, Asp9, Ser40, and Asn93 each contribute to the a divalent metal cation site.

It belongs to the SurE nucleotidase family. The cofactor is a divalent metal cation.

It localises to the cytoplasm. It carries out the reaction a ribonucleoside 5'-phosphate + H2O = a ribonucleoside + phosphate. Nucleotidase that shows phosphatase activity on nucleoside 5'-monophosphates. The protein is 5'-nucleotidase SurE of Rhodopseudomonas palustris (strain BisB5).